A 224-amino-acid polypeptide reads, in one-letter code: Thiamine-phosphate synthase (224 aa).

Residues Gln44–Lys48 and Asn79 contribute to the 4-amino-2-methyl-5-(diphosphooxymethyl)pyrimidine site. Positions 80 and 99 each coordinate Mg(2+). Ser117 lines the 4-amino-2-methyl-5-(diphosphooxymethyl)pyrimidine pocket. 2-[(2R,5Z)-2-carboxy-4-methylthiazol-5(2H)-ylidene]ethyl phosphate is bound at residue Thr143 to Thr145. Position 146 (Lys146) interacts with 4-amino-2-methyl-5-(diphosphooxymethyl)pyrimidine. 2-[(2R,5Z)-2-carboxy-4-methylthiazol-5(2H)-ylidene]ethyl phosphate-binding positions include Gly175 and Ile195–Ser196.

It belongs to the thiamine-phosphate synthase family. Requires Mg(2+) as cofactor.

It catalyses the reaction 2-[(2R,5Z)-2-carboxy-4-methylthiazol-5(2H)-ylidene]ethyl phosphate + 4-amino-2-methyl-5-(diphosphooxymethyl)pyrimidine + 2 H(+) = thiamine phosphate + CO2 + diphosphate. It carries out the reaction 2-(2-carboxy-4-methylthiazol-5-yl)ethyl phosphate + 4-amino-2-methyl-5-(diphosphooxymethyl)pyrimidine + 2 H(+) = thiamine phosphate + CO2 + diphosphate. The catalysed reaction is 4-methyl-5-(2-phosphooxyethyl)-thiazole + 4-amino-2-methyl-5-(diphosphooxymethyl)pyrimidine + H(+) = thiamine phosphate + diphosphate. Its pathway is cofactor biosynthesis; thiamine diphosphate biosynthesis; thiamine phosphate from 4-amino-2-methyl-5-diphosphomethylpyrimidine and 4-methyl-5-(2-phosphoethyl)-thiazole: step 1/1. Its function is as follows. Condenses 4-methyl-5-(beta-hydroxyethyl)thiazole monophosphate (THZ-P) and 2-methyl-4-amino-5-hydroxymethyl pyrimidine pyrophosphate (HMP-PP) to form thiamine monophosphate (TMP). This is Thiamine-phosphate synthase from Bacillus licheniformis (strain ATCC 14580 / DSM 13 / JCM 2505 / CCUG 7422 / NBRC 12200 / NCIMB 9375 / NCTC 10341 / NRRL NRS-1264 / Gibson 46).